The chain runs to 410 residues: S-adenosylmethionine synthase (410 aa).

H15 is a binding site for ATP. Residue D17 participates in Mg(2+) binding. E43 is a binding site for K(+). L-methionine contacts are provided by E56 and Q100. The flexible loop stretch occupies residues 100–110; the sequence is QSPDIAKGVDT. Residues 171–173, 248–249, D257, 263–264, A280, and K284 contribute to the ATP site; these read DGK, KF, and RK. D257 serves as a coordination point for L-methionine. Position 288 (K288) interacts with L-methionine.

Belongs to the AdoMet synthase family. As to quaternary structure, homotetramer; dimer of dimers. It depends on Mg(2+) as a cofactor. Requires K(+) as cofactor.

It localises to the cytoplasm. The catalysed reaction is L-methionine + ATP + H2O = S-adenosyl-L-methionine + phosphate + diphosphate. Its pathway is amino-acid biosynthesis; S-adenosyl-L-methionine biosynthesis; S-adenosyl-L-methionine from L-methionine: step 1/1. Its function is as follows. Catalyzes the formation of S-adenosylmethionine (AdoMet) from methionine and ATP. The overall synthetic reaction is composed of two sequential steps, AdoMet formation and the subsequent tripolyphosphate hydrolysis which occurs prior to release of AdoMet from the enzyme. The protein is S-adenosylmethionine synthase of Prochlorococcus marinus (strain MIT 9211).